A 383-amino-acid chain; its full sequence is UDP-D-xylose:L-fucose alpha-1,3-D-xylosyltransferase 3 (383 aa).

Over 1–20 (MAQQSQRPISNRHISLLNRN) the chain is Cytoplasmic. Residues 21-41 (GLILLLLLALFVILGVFLPLT) traverse the membrane as a helical; Signal-anchor for type II membrane protein segment. Topologically, residues 42 to 383 (KSSLFMFPNT…KNRGKKHKLP (342 aa)) are lumenal. N-linked (GlcNAc...) asparagine glycans are attached at residues asparagine 50, asparagine 82, and asparagine 157. Positions 180–182 (DVD) match the DXD motif motif. Asparagine 212, asparagine 258, asparagine 301, asparagine 306, asparagine 357, and asparagine 364 each carry an N-linked (GlcNAc...) asparagine glycan.

The protein belongs to the glycosyltransferase 77 family. Mn(2+) is required as a cofactor. Mg(2+) serves as cofactor. Glycosylated. In terms of tissue distribution, expressed around trichome support cells in the adaxial epidermis of rosette leaves, in cauline leaves, petals and both the proximal and distal ends of siliques.

The protein resides in the golgi apparatus membrane. Catalyzes the transfer of D-xylose from UDP-alpha-D-xylose onto L-fucose. Probably involved in the biosynthesis of rhamnogalacturonan II (RG-II) through xylosylation of the internal fucose moiety of the A-chain of RG-II, a structurally complex pectic polysaccharide of the primary cell wall. RG-II is essential for the cell wall integrity of rapidly growing tissues such as roots and pollen tube growth and elongation. The protein is UDP-D-xylose:L-fucose alpha-1,3-D-xylosyltransferase 3 of Arabidopsis thaliana (Mouse-ear cress).